Consider the following 238-residue polypeptide: Isoamyl acetate-hydrolyzing esterase (238 aa).

The active-site Nucleophile is the Ser12. The Proton donor role is filled by Asp187. The active-site Proton acceptor is His190.

The protein belongs to the 'GDSL' lipolytic enzyme family. IAH1 subfamily. Homodimer.

It carries out the reaction 3-methylbutyl acetate + H2O = 3-methylbutanol + acetate + H(+). Its function is as follows. Plays a crucial role in the hydrolysis of isoamyl acetate in sake mash. Hydrolyzes short chain esters from acetate (C2) to hexanoate (C6), showing more specificity for shorter chain exters. No activity for decanoate (C10) esters. The protein is Isoamyl acetate-hydrolyzing esterase of Saccharomyces cerevisiae (strain ATCC 204508 / S288c) (Baker's yeast).